Here is a 55-residue protein sequence, read N- to C-terminus: ATP synthase protein 8 (55 aa).

Residues 4–24 (LNPNPWFTILIFTWAVFLTIL) traverse the membrane as a helical segment.

The protein belongs to the ATPase protein 8 family. In terms of assembly, F-type ATPases have 2 components, CF(1) - the catalytic core - and CF(0) - the membrane proton channel.

The protein localises to the mitochondrion membrane. Functionally, mitochondrial membrane ATP synthase (F(1)F(0) ATP synthase or Complex V) produces ATP from ADP in the presence of a proton gradient across the membrane which is generated by electron transport complexes of the respiratory chain. F-type ATPases consist of two structural domains, F(1) - containing the extramembraneous catalytic core and F(0) - containing the membrane proton channel, linked together by a central stalk and a peripheral stalk. During catalysis, ATP synthesis in the catalytic domain of F(1) is coupled via a rotary mechanism of the central stalk subunits to proton translocation. Part of the complex F(0) domain. Minor subunit located with subunit a in the membrane. The protein is ATP synthase protein 8 (mt-atp8) of Polypterus ornatipinnis (Ornate bichir).